The primary structure comprises 230 residues: Porin OmpL (230 aa).

Residues 1-20 form the signal peptide; that stretch reads MKKINAIILLSSLTSASVFA.

Belongs to the oligogalacturonate-specific porin KdgM (TC 1.B.35) family. OmpL subfamily.

The protein resides in the cell outer membrane. In terms of biological role, outer membrane channel protein that allows an efficient diffusion of low-molecular-weight solutes such as small sugars and tetraglycine. However, the specific substrate recognized by the OmpL channel is unknown. The sequence is that of Porin OmpL (ompL) from Escherichia coli (strain K12).